The sequence spans 631 residues: MNPSTPSYPTASLYVGDLHPDVTEAMLYEKFSPAGPILSIRICRDLITSGSSNYAYVNFQHTKDAEHALDTMNFDVIKGKPVRIMWSQRDPSLRKSGVGNIFVKNLDKSINNKALYDTVSAFGNILSCNVVCDENGSKGYGFVHFETHEAAERAIKKMNGMLLNGRKVFVGQFKSRKEREAELGARAKEFPNVYIKNFGEDMDDERLKDLFGKFGPALSVKVMTDESGKSKGFGFVSFERHEDAQKAVDEMNGKELNGKQIYVGRAQKKVERQTELKRTFEQMKQDRITRYQVVNLYVKNLDDGIDDERLRKAFSPFGTITSAKVMMEGGRSKGFGFVCFSSPEEATKAVTEMNGRIVATKPLYVALAQRKEERQAYLTNEYMQRMASVRAVPNQRAPPSGYFMTAVPQTQNHAAYYPPSQIARLRPSPRWTAQGARPHPFQNKPSAIRPGAPRVPFSTMRPASSQVPRVMSTQRVANTSTQTVGPRPAAAAAAAATPAVRTVPRYKYAAGVRNPQQHRNAQPQVTMQQLAVHVQGQETLTASRLASAPPQKQKQMLGERLFPLIQAMHPTLAGKITGMLLEIDNSELLYMLESPESLRSKVDEAVAVLQAHQAKEATQKAVNSATGVPTV.

4 consecutive RRM domains span residues 11-89 (ASLY…WSQR), 99-175 (GNIF…QFKS), 191-268 (PNVY…RAQK), and 294-370 (VNLY…LAQR). Y140 is modified (phosphotyrosine). S315 bears the Phosphoserine mark. Position 361 is an N6,N6-dimethyllysine; alternate (K361). A Glycyl lysine isopeptide (Lys-Gly) (interchain with G-Cter in SUMO2); alternate cross-link involves residue K361. Y364 carries the post-translational modification Phosphotyrosine. An omega-N-methylarginine mark is found at R426, R430, and R449. R501 is subject to Dimethylated arginine. The residue at position 513 (R513) is an Omega-N-methylarginine. The region spanning 537–614 (QETLTASRLA…AVAVLQAHQA (78 aa)) is the PABC domain.

This sequence belongs to the polyadenylate-binding protein type-1 family. Testis specific.

It is found in the cytoplasm. Its function is as follows. Binds the poly(A) tail of mRNA. May be involved in cytoplasmic regulatory processes of mRNA metabolism. Binds poly(A) with a slightly lower affinity as compared to PABPC1. The sequence is that of Polyadenylate-binding protein 3 (PABPC3) from Homo sapiens (Human).